A 101-amino-acid chain; its full sequence is MNLENVILSPVVTEKSQDLQTIGERMGKRTVKYTFKVHPDANKTLIKQALKQMYNVVPTNVNVAVYRGKMKRFRNMPSQRPHYKKAVVTFADGANLDFAKV.

It belongs to the universal ribosomal protein uL23 family. In terms of assembly, part of the 50S ribosomal subunit. Contacts protein L29, and trigger factor when it is bound to the ribosome.

In terms of biological role, one of the early assembly proteins it binds 23S rRNA. One of the proteins that surrounds the polypeptide exit tunnel on the outside of the ribosome. Forms the main docking site for trigger factor binding to the ribosome. This Leptospira biflexa serovar Patoc (strain Patoc 1 / Ames) protein is Large ribosomal subunit protein uL23.